The following is a 225-amino-acid chain: UPF0758 protein XOO0495 (225 aa).

An MPN domain is found at 102 to 224; the sequence is ALSDPPSVGR…PVSLAERGWL (123 aa). Residues His173, His175, and Asp186 each coordinate Zn(2+). Positions 173–186 match the JAMM motif motif; it reads HNHPSGNPEPSKAD.

It belongs to the UPF0758 family.

This chain is UPF0758 protein XOO0495, found in Xanthomonas oryzae pv. oryzae (strain KACC10331 / KXO85).